The sequence spans 236 residues: Large ribosomal subunit protein uL3 (236 aa).

2 disordered regions span residues Ser132–Gln153 and Lys200–Gly236. Polar residues predominate over residues Asn133–Val145. Gln153 is modified (N5-methylglutamine). The span at Val206–Thr216 shows a compositional bias: polar residues. Low complexity predominate over residues Asn217–Gly228.

This sequence belongs to the universal ribosomal protein uL3 family. As to quaternary structure, part of the 50S ribosomal subunit. Forms a cluster with proteins L14 and L19. Post-translationally, methylated by PrmB.

Its function is as follows. One of the primary rRNA binding proteins, it binds directly near the 3'-end of the 23S rRNA, where it nucleates assembly of the 50S subunit. The sequence is that of Large ribosomal subunit protein uL3 from Nitrosospira multiformis (strain ATCC 25196 / NCIMB 11849 / C 71).